Consider the following 156-residue polypeptide: Methylated-DNA--protein-cysteine methyltransferase (156 aa).

Cysteine 126 functions as the Nucleophile; methyl group acceptor in the catalytic mechanism.

The protein belongs to the MGMT family.

Its subcellular location is the cytoplasm. It carries out the reaction a 6-O-methyl-2'-deoxyguanosine in DNA + L-cysteinyl-[protein] = S-methyl-L-cysteinyl-[protein] + a 2'-deoxyguanosine in DNA. The catalysed reaction is a 4-O-methyl-thymidine in DNA + L-cysteinyl-[protein] = a thymidine in DNA + S-methyl-L-cysteinyl-[protein]. In terms of biological role, involved in the cellular defense against the biological effects of O6-methylguanine (O6-MeG) and O4-methylthymine (O4-MeT) in DNA. Repairs the methylated nucleobase in DNA by stoichiometrically transferring the methyl group to a cysteine residue in the enzyme. This is a suicide reaction: the enzyme is irreversibly inactivated. This chain is Methylated-DNA--protein-cysteine methyltransferase, found in Methanosarcina acetivorans (strain ATCC 35395 / DSM 2834 / JCM 12185 / C2A).